The chain runs to 257 residues: MQKVTIQEAEHLLQEIMSEEDDRFQILIKDERKGVQKLISKWYKQKELAQKEKEKFLEMSKYENALREKGLTYIAGIDEVGRGPLAGPVVTAAVILPEDFYIPGLNDSKKLSEAKRERFYDEIKAQAIAIGVGIVSPQVIDEINIYQATKQAMLDAVANLSCTPEYLLIDAMKLPTPIPQTSIIKGDAKSISISAASIIAKVTRDRMMKELGEKYPAYGFEQHMGYGTKQHLEAIEVHGVLEEHRKSFAPIKDMIQK.

Positions 72-257 (TYIAGIDEVG…FAPIKDMIQK (186 aa)) constitute an RNase H type-2 domain. Residues Asp78, Glu79, and Asp170 each coordinate a divalent metal cation.

This sequence belongs to the RNase HII family. It depends on Mn(2+) as a cofactor. Mg(2+) serves as cofactor.

The protein localises to the cytoplasm. It carries out the reaction Endonucleolytic cleavage to 5'-phosphomonoester.. Functionally, endonuclease that specifically degrades the RNA of RNA-DNA hybrids. The sequence is that of Ribonuclease HII from Bacillus cereus (strain ZK / E33L).